Here is a 192-residue protein sequence, read N- to C-terminus: Peptidyl-tRNA hydrolase (192 aa).

Tyrosine 18 provides a ligand contact to tRNA. Histidine 23 acts as the Proton acceptor in catalysis. Phenylalanine 69, asparagine 71, and asparagine 117 together coordinate tRNA.

The protein belongs to the PTH family. In terms of assembly, monomer.

The protein localises to the cytoplasm. The catalysed reaction is an N-acyl-L-alpha-aminoacyl-tRNA + H2O = an N-acyl-L-amino acid + a tRNA + H(+). Hydrolyzes ribosome-free peptidyl-tRNAs (with 1 or more amino acids incorporated), which drop off the ribosome during protein synthesis, or as a result of ribosome stalling. In terms of biological role, catalyzes the release of premature peptidyl moieties from peptidyl-tRNA molecules trapped in stalled 50S ribosomal subunits, and thus maintains levels of free tRNAs and 50S ribosomes. The protein is Peptidyl-tRNA hydrolase of Neisseria gonorrhoeae (strain ATCC 700825 / FA 1090).